The chain runs to 213 residues: Ribonuclease HII (213 aa).

Residues 2–213 (GRVAGIDEAG…KEWATWKRLR (212 aa)) enclose the RNase H type-2 domain. 3 residues coordinate a divalent metal cation: Asp-8, Glu-9, and Asp-113.

It belongs to the RNase HII family. The cofactor is Mn(2+). Mg(2+) serves as cofactor.

The protein resides in the cytoplasm. It catalyses the reaction Endonucleolytic cleavage to 5'-phosphomonoester.. Functionally, endonuclease that specifically degrades the RNA of RNA-DNA hybrids. This chain is Ribonuclease HII, found in Thermofilum pendens (strain DSM 2475 / Hrk 5).